Reading from the N-terminus, the 341-residue chain is Keratin-associated protein 29-1 (341 aa).

7 tandem repeats follow at residues 5–9 (CCPGN), 115–119 (CCQEK), 120–124 (CCDAS), 150–154 (CCDAG), 240–244 (CCVPS), 276–280 (CCKPA), and 307–311 (CCVTG). Positions 5-311 (CCPGNTTAIP…GCKSACCVTG (307 aa)) are 7 X 5 AA repeats of C-C-X(3).

Belongs to the KRTAP type 10 family.

This is Keratin-associated protein 29-1 (KRTAP29-1) from Homo sapiens (Human).